We begin with the raw amino-acid sequence, 59 residues long: Small ribosomal subunit protein eS30 (59 aa).

A disordered region spans residues 1 to 35 (KVHGSLARAGKVRGQTPKVAKQEKKKKKTGRAKRR). A compositionally biased stretch (basic residues) spans 23–35 (EKKKKKTGRAKRR). At lysine 51 the chain carries N6-succinyllysine.

The protein belongs to the eukaryotic ribosomal protein eS30 family.

In Mus spicilegus (Steppe mouse), this protein is Small ribosomal subunit protein eS30 (Fau).